Reading from the N-terminus, the 633-residue chain is Phosphomethylpyrimidine synthase (633 aa).

Residues 1–13 (MNIRSNPDTTLPA) are compositionally biased toward polar residues. The segment at 1–22 (MNIRSNPDTTLPAVTTGPLPSS) is disordered. Residues asparagine 221, methionine 250, tyrosine 279, histidine 315, 335-337 (SRG), 376-379 (DGLR), and glutamate 415 contribute to the substrate site. Residue histidine 419 participates in Zn(2+) binding. Tyrosine 442 provides a ligand contact to substrate. Histidine 483 contributes to the Zn(2+) binding site. Positions 563, 566, and 571 each coordinate [4Fe-4S] cluster.

This sequence belongs to the ThiC family. Homodimer. [4Fe-4S] cluster is required as a cofactor.

The enzyme catalyses 5-amino-1-(5-phospho-beta-D-ribosyl)imidazole + S-adenosyl-L-methionine = 4-amino-2-methyl-5-(phosphooxymethyl)pyrimidine + CO + 5'-deoxyadenosine + formate + L-methionine + 3 H(+). It participates in cofactor biosynthesis; thiamine diphosphate biosynthesis. Its function is as follows. Catalyzes the synthesis of the hydroxymethylpyrimidine phosphate (HMP-P) moiety of thiamine from aminoimidazole ribotide (AIR) in a radical S-adenosyl-L-methionine (SAM)-dependent reaction. The protein is Phosphomethylpyrimidine synthase of Bradyrhizobium sp. (strain BTAi1 / ATCC BAA-1182).